We begin with the raw amino-acid sequence, 373 residues long: GTPase Obg (373 aa).

The Obg domain occupies 1-159 (MKFIDEARIE…RMVRLELKVL (159 aa)). The tract at residues 128-147 (LHFKSSTNRAPRQKTDGKPG) is disordered. In terms of domain architecture, OBG-type G spans 160-334 (ADVGLLGMPN…LCYAVFDHIS (175 aa)). GTP contacts are provided by residues 166-173 (GMPNAGKS), 191-195 (FTTLA), 213-216 (DIPG), 284-287 (NKLD), and 315-317 (SAL). 2 residues coordinate Mg(2+): Ser173 and Thr193. The segment at 354–373 (FREKPQAPAAADDAGTDPQV) is disordered. The segment covering 359 to 373 (QAPAAADDAGTDPQV) has biased composition (low complexity).

The protein belongs to the TRAFAC class OBG-HflX-like GTPase superfamily. OBG GTPase family. As to quaternary structure, monomer. Mg(2+) serves as cofactor.

It localises to the cytoplasm. An essential GTPase which binds GTP, GDP and possibly (p)ppGpp with moderate affinity, with high nucleotide exchange rates and a fairly low GTP hydrolysis rate. Plays a role in control of the cell cycle, stress response, ribosome biogenesis and in those bacteria that undergo differentiation, in morphogenesis control. This Paraburkholderia phytofirmans (strain DSM 17436 / LMG 22146 / PsJN) (Burkholderia phytofirmans) protein is GTPase Obg.